Here is a 384-residue protein sequence, read N- to C-terminus: Cyclohexane-1-carbonyl-CoA dehydrogenase (384 aa).

Belongs to the acyl-CoA dehydrogenase family. In terms of assembly, homotetramer. FAD serves as cofactor.

It carries out the reaction cyclohexane-1-carbonyl-CoA + oxidized [electron-transfer flavoprotein] + H(+) = cyclohex-1-ene-1-carbonyl-CoA + reduced [electron-transfer flavoprotein]. Mediates the conversion of cyclohexane-1-carbonyl-CoA (ChCoA) into cyclohex-1-ene-1-carbonyl-CoA in biosynthesis of cyclohexane-1-carboxylate, a by-product produced during fermentation of benzoate and crotonate to acetate. The protein is Cyclohexane-1-carbonyl-CoA dehydrogenase of Syntrophus aciditrophicus (strain SB).